Consider the following 462-residue polypeptide: MGYLYYLLHPYQLRSIIQWKVWHDPVHERDPSTESPELQECFRYLNLTSRSFAAVIQELNHELLVPITLFYLCLRGLDTIEDDMTLPLEKKIPILRNFHTTMNEDGWQFHESQEKDKELLEHFDVVITELKKIKAPYHEIITDMTRKMGNGMADYAENEEMIKNGVQTIEEYELYCHYVAGLVGEGLTRLFVESELANPKLAERPSLTESMGQFLQKTNIIRDLHEDWQDGRRWYPKEIWSQHVDKWEDMFNPAQQTKAIECVSHMVLDALKHSEECLFYMAGIKDQSVFNFVAIPEGMAIATLELVFRNPEVLKRNVKITKGDACKIMFECTQNLFTVCEVFKRYTRKIAKKNDPRDPNFLAISAQCAKIEQFIETLFPKQDPKKLTLTQAQAQNKEPTMDAGEAVVLFGVVIAALVCISGLMLGTAWFFGARFDHIFREASVFLPGREKATPMITGHEEL.

Residues 406–426 (AVVLFGVVIAALVCISGLMLG) form a helical membrane-spanning segment.

Belongs to the phytoene/squalene synthase family. Requires Mg(2+) as cofactor.

It is found in the endoplasmic reticulum membrane. It localises to the microsome. It carries out the reaction 2 (2E,6E)-farnesyl diphosphate + NADPH + H(+) = squalene + 2 diphosphate + NADP(+). The enzyme catalyses 2 (2E,6E)-farnesyl diphosphate + NADH + H(+) = squalene + 2 diphosphate + NAD(+). Its pathway is terpene metabolism; lanosterol biosynthesis; lanosterol from farnesyl diphosphate: step 1/3. The protein operates within steroid metabolism; ergosterol biosynthesis. Its function is as follows. Squalene synthase; part of the third module of ergosterol biosynthesis pathway that includes the late steps of the pathway. ERG9 produces squalene from 2 farnesyl pyrophosphate moieties. The third module or late pathway involves the ergosterol synthesis itself through consecutive reactions that mainly occur in the endoplasmic reticulum (ER) membrane. Firstly, the squalene synthase ERG9 catalyzes the condensation of 2 farnesyl pyrophosphate moieties to form squalene, which is the precursor of all steroids. Squalene synthase is crucial for balancing the incorporation of farnesyl diphosphate (FPP) into sterol and nonsterol isoprene synthesis. Secondly, squalene is converted into lanosterol by the consecutive action of the squalene epoxidase ERG1 and the lanosterol synthase ERG7. Then, the delta(24)-sterol C-methyltransferase ERG6 methylates lanosterol at C-24 to produce eburicol. Eburicol is the substrate of the sterol 14-alpha demethylase encoded by CYP51A, CYP51B and CYP51C, to yield 4,4,24-trimethyl ergosta-8,14,24(28)-trienol. CYP51B encodes the enzyme primarily responsible for sterol 14-alpha-demethylation, and plays an essential role in ascospore formation. CYP51A encodes an additional sterol 14-alpha-demethylase, induced on ergosterol depletion and responsible for the intrinsic variation in azole sensitivity. The third CYP51 isoform, CYP51C, does not encode a sterol 14-alpha-demethylase, but is required for full virulence on host wheat ears. The C-14 reductase ERG24 then reduces the C14=C15 double bond which leads to 4,4-dimethylfecosterol. A sequence of further demethylations at C-4, involving the C-4 demethylation complex containing the C-4 methylsterol oxidases ERG25, the sterol-4-alpha-carboxylate 3-dehydrogenase ERG26 and the 3-keto-steroid reductase ERG27, leads to the production of fecosterol via 4-methylfecosterol. ERG28 has a role as a scaffold to help anchor ERG25, ERG26 and ERG27 to the endoplasmic reticulum. The C-8 sterol isomerase ERG2 then catalyzes the reaction which results in unsaturation at C-7 in the B ring of sterols and thus converts fecosterol to episterol. The sterol-C5-desaturases ERG3A and ERG3BB then catalyze the introduction of a C-5 double bond in the B ring to produce 5-dehydroepisterol. The C-22 sterol desaturases ERG5A and ERG5B further convert 5-dehydroepisterol into ergosta-5,7,22,24(28)-tetraen-3beta-ol by forming the C-22(23) double bond in the sterol side chain. Finally, ergosta-5,7,22,24(28)-tetraen-3beta-ol is substrate of the C-24(28) sterol reductase ERG4 to produce ergosterol. The sequence is that of Squalene synthase ERG9 from Gibberella zeae (strain ATCC MYA-4620 / CBS 123657 / FGSC 9075 / NRRL 31084 / PH-1) (Wheat head blight fungus).